A 600-amino-acid chain; its full sequence is Proline--tRNA ligase (600 aa).

The protein belongs to the class-II aminoacyl-tRNA synthetase family. ProS type 1 subfamily. As to quaternary structure, homodimer.

Its subcellular location is the cytoplasm. It carries out the reaction tRNA(Pro) + L-proline + ATP = L-prolyl-tRNA(Pro) + AMP + diphosphate. In terms of biological role, catalyzes the attachment of proline to tRNA(Pro) in a two-step reaction: proline is first activated by ATP to form Pro-AMP and then transferred to the acceptor end of tRNA(Pro). As ProRS can inadvertently accommodate and process non-cognate amino acids such as alanine and cysteine, to avoid such errors it has two additional distinct editing activities against alanine. One activity is designated as 'pretransfer' editing and involves the tRNA(Pro)-independent hydrolysis of activated Ala-AMP. The other activity is designated 'posttransfer' editing and involves deacylation of mischarged Ala-tRNA(Pro). The misacylated Cys-tRNA(Pro) is not edited by ProRS. This chain is Proline--tRNA ligase, found in Synechococcus sp. (strain ATCC 27144 / PCC 6301 / SAUG 1402/1) (Anacystis nidulans).